Reading from the N-terminus, the 82-residue chain is Small ribosomal subunit protein bS18 (82 aa).

The segment at 1–20 (MSEASSAPVRRPFHRRRKTC) is disordered.

The protein belongs to the bacterial ribosomal protein bS18 family. In terms of assembly, part of the 30S ribosomal subunit. Forms a tight heterodimer with protein bS6.

Functionally, binds as a heterodimer with protein bS6 to the central domain of the 16S rRNA, where it helps stabilize the platform of the 30S subunit. The polypeptide is Small ribosomal subunit protein bS18 (Rhizobium etli (strain CIAT 652)).